The chain runs to 380 residues: Anhydro-N-acetylmuramic acid kinase (380 aa).

17 to 24 is an ATP binding site; sequence GTSMDGAD.

Belongs to the anhydro-N-acetylmuramic acid kinase family.

It carries out the reaction 1,6-anhydro-N-acetyl-beta-muramate + ATP + H2O = N-acetyl-D-muramate 6-phosphate + ADP + H(+). The protein operates within amino-sugar metabolism; 1,6-anhydro-N-acetylmuramate degradation. It functions in the pathway cell wall biogenesis; peptidoglycan recycling. Catalyzes the specific phosphorylation of 1,6-anhydro-N-acetylmuramic acid (anhMurNAc) with the simultaneous cleavage of the 1,6-anhydro ring, generating MurNAc-6-P. Is required for the utilization of anhMurNAc either imported from the medium or derived from its own cell wall murein, and thus plays a role in cell wall recycling. This chain is Anhydro-N-acetylmuramic acid kinase, found in Cupriavidus metallidurans (strain ATCC 43123 / DSM 2839 / NBRC 102507 / CH34) (Ralstonia metallidurans).